Consider the following 81-residue polypeptide: Cytotoxin 1b (81 aa).

The first 21 residues, 1–21 (MKTLLLTLVVVTIVCLDLGYT), serve as a signal peptide directing secretion. 4 disulfides stabilise this stretch: C24–C42, C35–C59, C63–C74, and C75–C80.

It belongs to the three-finger toxin family. Short-chain subfamily. Type IA cytotoxin sub-subfamily. In terms of assembly, monomer in solution; Homodimer and oligomer in the presence of negatively charged lipids forming a pore with a size ranging between 20 and 30 Angstroms. Expressed by the venom gland.

It localises to the secreted. It is found in the target cell membrane. Functionally, shows cytolytic activity on many different cells by forming pore in lipid membranes. In vivo, increases heart rate or kills the animal by cardiac arrest. In addition, it binds to heparin with high affinity, interacts with Kv channel-interacting protein 1 (KCNIP1) in a calcium-independent manner, and binds to integrin alpha-V/beta-3 (ITGAV/ITGB3) with moderate affinity. The protein is Cytotoxin 1b of Naja atra (Chinese cobra).